Here is a 1343-residue protein sequence, read N- to C-terminus: Spermatogenesis-associated protein 31A6 (1343 aa).

The helical transmembrane segment at 23–43 (PWVLDIFLTLVFALGFFFLLL) threads the bilayer. 6 disordered regions span residues 55-88 (PSPSPGKRKCPVGRRRRPRGRMKNHSLRAGRECP), 106-235 (GPHL…STLI), 624-654 (DESPGTSQAKGKPSPWQSSTSTGESSKEAQK), 895-951 (PRGI…REAV), 1080-1156 (VQEE…PPSV), and 1309-1331 (KAVSPVSPPQHWPKTSGASSHHH). The segment covering 60 to 82 (GKRKCPVGRRRRPRGRMKNHSLR) has biased composition (basic residues). The segment covering 165 to 178 (LASTPSPGPMTTSV) has biased composition (polar residues). A compositionally biased stretch (pro residues) spans 198-222 (PEPPALFPHPPHTPDPLACSPPPPK). 2 stretches are compositionally biased toward polar residues: residues 627–647 (PGTSQAKGKPSPWQSSTSTGE) and 923–944 (LTYSLTGSTQQSRSLGAQSSKA). 2 stretches are compositionally biased toward basic and acidic residues: residues 1104–1123 (HKSEKSRKPNLEKHEERLEG) and 1133–1142 (RKTEDTHQDE).

It belongs to the SPATA31 family.

It is found in the membrane. Its function is as follows. May play a role in spermatogenesis. This chain is Spermatogenesis-associated protein 31A6 (SPATA31A6), found in Homo sapiens (Human).